Consider the following 207-residue polypeptide: Thiamine-phosphate synthase (207 aa).

Residues 38-42 (QYRAK) and Asn-70 each bind 4-amino-2-methyl-5-(diphosphooxymethyl)pyrimidine. Residues Asp-71 and Asp-90 each coordinate Mg(2+). Thr-109 is a 4-amino-2-methyl-5-(diphosphooxymethyl)pyrimidine binding site. A 2-[(2R,5Z)-2-carboxy-4-methylthiazol-5(2H)-ylidene]ethyl phosphate-binding site is contributed by 135-137 (TNS). Lys-138 is a 4-amino-2-methyl-5-(diphosphooxymethyl)pyrimidine binding site. 2-[(2R,5Z)-2-carboxy-4-methylthiazol-5(2H)-ylidene]ethyl phosphate contacts are provided by residues Gly-165 and 185–186 (IS).

The protein belongs to the thiamine-phosphate synthase family. Mg(2+) serves as cofactor.

The catalysed reaction is 2-[(2R,5Z)-2-carboxy-4-methylthiazol-5(2H)-ylidene]ethyl phosphate + 4-amino-2-methyl-5-(diphosphooxymethyl)pyrimidine + 2 H(+) = thiamine phosphate + CO2 + diphosphate. It carries out the reaction 2-(2-carboxy-4-methylthiazol-5-yl)ethyl phosphate + 4-amino-2-methyl-5-(diphosphooxymethyl)pyrimidine + 2 H(+) = thiamine phosphate + CO2 + diphosphate. The enzyme catalyses 4-methyl-5-(2-phosphooxyethyl)-thiazole + 4-amino-2-methyl-5-(diphosphooxymethyl)pyrimidine + H(+) = thiamine phosphate + diphosphate. It functions in the pathway cofactor biosynthesis; thiamine diphosphate biosynthesis; thiamine phosphate from 4-amino-2-methyl-5-diphosphomethylpyrimidine and 4-methyl-5-(2-phosphoethyl)-thiazole: step 1/1. Its function is as follows. Condenses 4-methyl-5-(beta-hydroxyethyl)thiazole monophosphate (THZ-P) and 2-methyl-4-amino-5-hydroxymethyl pyrimidine pyrophosphate (HMP-PP) to form thiamine monophosphate (TMP). This chain is Thiamine-phosphate synthase, found in Clostridium perfringens (strain 13 / Type A).